The chain runs to 371 residues: Flagellar P-ring protein 1 (371 aa).

Residues 1-19 form the signal peptide; sequence MRRALLLAALLACAPPAFA.

The protein belongs to the FlgI family. In terms of assembly, the basal body constitutes a major portion of the flagellar organelle and consists of four rings (L,P,S, and M) mounted on a central rod.

Its subcellular location is the periplasm. The protein localises to the bacterial flagellum basal body. In terms of biological role, assembles around the rod to form the L-ring and probably protects the motor/basal body from shearing forces during rotation. This is Flagellar P-ring protein 1 from Cereibacter sphaeroides (strain ATCC 17023 / DSM 158 / JCM 6121 / CCUG 31486 / LMG 2827 / NBRC 12203 / NCIMB 8253 / ATH 2.4.1.) (Rhodobacter sphaeroides).